The sequence spans 2265 residues: MLLVLCLTMICFHVCVNQDSGPEYADVVFLVDSSDHLGLKSFPLVKTFIHKMISSLPIEANKYRVALAQYSDALHNEFQLGTFKNRNPMLNHLKKNFGFIGGSLKIGNALQEAHRTYFSAPTNGRDKKQFPPILVVLASAESEDDVEEAAKALREDGVKIISVGVQKASEENLKAMATSQFHFNLRTARDLSVFAPNMTEIIKDVTQYREGMADDIIVEACQGPSVADVVFLLDMAINGSQEDLDHLKAFLGESISALDIKENCMRVGLVTYSNETRVISSLSTGNNKTEVLQRIQDLSPQVGQAYTGAALRKTRKEIFSAQRGSRKNQGVPQIAVLVTHRASEDNVTKAAVNLRREGVTIFTMGIEGANPDELEKIASHPAEQFTSKLGNFSELATHNQTFLKKLRNQITHTVSVFSERTETLKSACVDTEEADIYLLIDGSGSTQPTDFHEMKTFLSEVVGMFNIAPHKVRVGAVQYADTWDLEFEISKYSNKPDLGKAIENIRQMGGNTNTGAALNFTLKLLQRAKKERGSKVPCHLVVLTNGMSRDSVLGPAHKLREENIRVHAIGVKEANQTQLREIAGEEKRVYYVHEFDALRNIRNQVVQEICAEEACRDMKADIMFLVDSSGSIGPENFSKMKMFMKNLVSKSQIGADRVQIGVVQFSHENKEEFQLNTFMSQSDIANAIDRMTHIGETTLTGSALTFVSQYFSPDKGARPNVRKFLILITDGEAQDIVRDPAIALRKEGVIIYSVGVFGSNVTQLEEISGKPEMVFYVENFDILQHIEDDLVLGICSPREECKRIEVLDVVFVIDSSGSIDYQEYNIMKDFMIGLVKKADVGKNQVRFGALKYADDPEVLFYLDELGTKLEVVSVLQNDHPMGGNTYTAEALAFSDHMFTEARGSRLHKGVPQVLIVITDGESHDAEKLNTTAKALRDKGILVLAVGIAGANSWELLAMAGSSDKYYFVETFGGLKGIFSDVSASVCNSSKVDCEIEKVDLVFLMDGSNSIHPDDFQKMKGFLVSVVQDFDVSLNRVRIGVAQFSDSYRSEFLLGTFTGEREISTQIEGIQQIFGYTHIGDALRKVKYYFQPDMGSRINAGTPQVLLVLTDGRSQDEVAQAAEELRHKGVDIYSVGIGDVDDQELVQITGTAEKKLTVHNFDELKKVKKRIVRNICTSGGESNCFVDVVVGFDISSLQRGQTLLEGQPWMGSYLQDLLRAISSLNGVSCEVGTETQVSIAFQVTNAMERYPSKFEIYSENILSSLQGVTVNGPSRLNANLLSSLWDTFQNKSAARGKVVLLFSDGLDDGIEKLEQKSDELRKEGLNALITIAVDGAADSSDLADLLYIEFGKGFEYRTQFTIGMRNLGSQLSRQLINVAERTCCCLLCKCTGGDGAMGDPGSAGKKGPPGFKGSDGYLGEEGIAGERGASGPMGEQGTKGCFGAKGPKGTRGLSGEEGEVGEDGLDGLDGEQGDHGIPGRRGEKGDEGSQGNPGRRGAAGDRGAKGLRGDPGTPGRDSSIQGPKGLKGDLGRQGRRGWPGSPGTPGSRRKMVVHGRRGHIGPQGNPGTPGPDGLAGSPGLRGPQGPRGEVGEKGEKGSLGMKGPQGPPGPGGQAGSQGHLGSQGNKGEPGDLGEKGAAGFPGPRGLQGDDGSPGYGSIGRKGTKGQEGFPGESGLKGDIGDPGDPGEAGPKGARGKTVSAGIPGEPGSPGEPGPPGRKGVKGARGLASFSTCDLIQYVRDHSPGRHGKPECPVHPTELVFVLDQSRDVTEQDFERMKGMMVSLVRDVKVREANCPVGARVAILAYNSHTRHLIRFSDAYRKDQLLTAIKALPYERSSDSREIGKAMRFISRNVFKRTLPGAHVRRIATFFSSGPSADAQTITTAAMEFSALDIVPVVIAFSNVPSVKRAFSIDDTGTFQVIVVPSGSDEGPALERLQRCTFCYDLCKPDASCDQAKPPPIQSYLDTAFLLDGSRHVGSAEFEDMRDFLEALLDHFEITSEPETSVTGDRVALLSHAPLDFLPNTQRSPVRTEFNLTSYSSKRLMKRHVDQAVQQLHGDAFLGHALGWALDNVFLNTPNLRRNKVIFVISAGETSHLDAETLKKESLRAKCHGYALFVFSLGPDWDDKELEDLASHPVDQHLIQLGRIHKPDHGYSVKFVKSFINSIRHGINKYPPVNLKAKCNRLGSRDLKPPPRQFRSFVPGPQKANLKDHTAEAAKLFQDKKRLSSMLKGGRATISSLSRSTRYAFKQGKEAIKATSKLGKRSA.

A signal peptide spans 1 to 18 (MLLVLCLTMICFHVCVNQ). Positions 19–1390 (DSGPEYADVV…TCCCLLCKCT (1372 aa)) are nonhelical region. 7 VWFA domains span residues 26 to 205 (DVVF…IKDV), 228 to 406 (DVVF…LKKL), 435 to 605 (DIYL…RNQV), 621 to 790 (DIMF…EDDL), 808 to 981 (DVVF…FSDV), 999 to 1170 (DLVF…KKRI), and 1186 to 1378 (DVVV…INVA). Asn-197, Asn-238, and Asn-346 each carry an N-linked (GlcNAc...) asparagine glycan. N-linked (GlcNAc...) asparagine glycosylation occurs at Asn-760. The interval 1391–1724 (GGDGAMGDPG…GRKGVKGARG (334 aa)) is triple-helical region. The interval 1398–1722 (DPGSAGKKGP…PPGRKGVKGA (325 aa)) is disordered. Over residues 1455-1470 (EEGEVGEDGLDGLDGE) the composition is skewed to acidic residues. Over residues 1497-1507 (AAGDRGAKGLR) the composition is skewed to basic and acidic residues. A Cell attachment site motif is present at residues 1507–1509 (RGD). The segment covering 1546-1558 (SRRKMVVHGRRGH) has biased composition (basic residues). A nonhelical region region spans residues 1725-2265 (LASFSTCDLI…ATSKLGKRSA (541 aa)). 2 consecutive VWFA domains span residues 1756–1936 (ELVF…ERLQ) and 1964–2165 (DTAF…INSI). The segment at 2186 to 2205 (SRDLKPPPRQFRSFVPGPQK) is disordered.

The protein belongs to the type VI collagen family. Trimers composed of three different chains: alpha-1(VI), alpha-2(VI), and alpha-3(VI) or alpha-4(VI) or alpha-5(VI) or alpha-6(VI). In terms of processing, prolines at the third position of the tripeptide repeating unit (G-X-Y) are hydroxylated in some or all of the chains. As to expression, in newborn, it is expressed in lung, heart, kidney, muscle, brain, intestine, skin, femur and sternum. In adult, it is expressed in lung, heart, muscle, ovary, brain, liver and sternum.

The protein resides in the secreted. It localises to the extracellular space. The protein localises to the extracellular matrix. In terms of biological role, collagen VI acts as a cell-binding protein. The polypeptide is Collagen alpha-6(VI) chain (Col6a6) (Mus musculus (Mouse)).